A 145-amino-acid chain; its full sequence is Probable disulfide formation protein (145 aa).

A helical transmembrane segment spans residues 9–28; that stretch reads ENLLLLIWVQAFLALAGSLF. C38 and C41 are joined by a disulfide. Helical transmembrane passes span 43-62 and 69-86; these read YQRI…AIKK and PGLF…YHYL. C100 and C106 are oxidised to a cystine. The chain crosses the membrane as a helical span at residues 115-137; that stretch reads GFISIPFMAGVAFLIIFVLHLLI.

This sequence belongs to the DsbB family. BdbC subfamily.

Its subcellular location is the cell membrane. Functionally, required for disulfide bond formation in some proteins. The chain is Probable disulfide formation protein from Oceanobacillus iheyensis (strain DSM 14371 / CIP 107618 / JCM 11309 / KCTC 3954 / HTE831).